A 347-amino-acid polypeptide reads, in one-letter code: UDP-N-acetylenolpyruvoylglucosamine reductase (347 aa).

The FAD-binding PCMH-type domain occupies 33–221 (AGGSAERIYL…SGAWFALPRD (189 aa)). The active site involves Arg180. Ser250 serves as the catalytic Proton donor. Residue Glu320 is part of the active site.

It belongs to the MurB family. The cofactor is FAD.

Its subcellular location is the cytoplasm. It carries out the reaction UDP-N-acetyl-alpha-D-muramate + NADP(+) = UDP-N-acetyl-3-O-(1-carboxyvinyl)-alpha-D-glucosamine + NADPH + H(+). Its pathway is cell wall biogenesis; peptidoglycan biosynthesis. Cell wall formation. This Nitrosospira multiformis (strain ATCC 25196 / NCIMB 11849 / C 71) protein is UDP-N-acetylenolpyruvoylglucosamine reductase.